A 332-amino-acid polypeptide reads, in one-letter code: Malate dehydrogenase, cytoplasmic (332 aa).

NAD(+) contacts are provided by residues 11–17 (GAAGQIA) and aspartate 42. Substrate contacts are provided by arginine 92 and arginine 98. Residues asparagine 105, glutamine 112, and 129–131 (VGN) each bind NAD(+). Substrate contacts are provided by asparagine 131 and arginine 162. Catalysis depends on histidine 187, which acts as the Proton acceptor.

Belongs to the LDH/MDH superfamily. MDH type 2 family. Homodimer.

It is found in the cytoplasm. It carries out the reaction (S)-malate + NAD(+) = oxaloacetate + NADH + H(+). Its activity is regulated as follows. By arsenate for both the forward and reverse reactions. Its function is as follows. Malate dehydrogenase. Has no activity with NADPH as substrate. Does not show lactate dehydrogenase activity. The chain is Malate dehydrogenase, cytoplasmic from Taenia solium (Pork tapeworm).